Consider the following 61-residue polypeptide: Transcription elongation factor Spt4 (61 aa).

The Zn(2+) site is built by cysteine 6, cysteine 9, cysteine 18, and cysteine 21.

It belongs to the archaeal Spt4 family. Heterodimer composed of Spt4 and Spt5.

Stimulates transcription elongation. The sequence is that of Transcription elongation factor Spt4 from Pyrococcus furiosus (strain ATCC 43587 / DSM 3638 / JCM 8422 / Vc1).